A 417-amino-acid polypeptide reads, in one-letter code: 1-deoxy-D-xylulose 5-phosphate reductoisomerase (417 aa).

Positions 10, 11, 12, 13, 36, 37, 38, and 130 each coordinate NADPH. Lys131 is a binding site for 1-deoxy-D-xylulose 5-phosphate. Glu132 is an NADPH binding site. Mn(2+) is bound at residue Asp156. Positions 157, 158, 194, and 217 each coordinate 1-deoxy-D-xylulose 5-phosphate. Glu158 contacts Mn(2+). Gly223 is a binding site for NADPH. 1-deoxy-D-xylulose 5-phosphate-binding residues include Ser230, Asn235, Lys236, and Glu239. Glu239 serves as a coordination point for Mn(2+).

The protein belongs to the DXR family. Mg(2+) is required as a cofactor. The cofactor is Mn(2+).

It catalyses the reaction 2-C-methyl-D-erythritol 4-phosphate + NADP(+) = 1-deoxy-D-xylulose 5-phosphate + NADPH + H(+). It functions in the pathway isoprenoid biosynthesis; isopentenyl diphosphate biosynthesis via DXP pathway; isopentenyl diphosphate from 1-deoxy-D-xylulose 5-phosphate: step 1/6. Its function is as follows. Catalyzes the NADPH-dependent rearrangement and reduction of 1-deoxy-D-xylulose-5-phosphate (DXP) to 2-C-methyl-D-erythritol 4-phosphate (MEP). This is 1-deoxy-D-xylulose 5-phosphate reductoisomerase from Synechococcus sp. (strain CC9902).